The primary structure comprises 1355 residues: Transcription factor MAR1 (1355 aa).

Residues 23 to 52 (CTICRKRKVKCDKTRPHCNQCTKTGVAHLC) constitute a DNA-binding region (zn(2)-C6 fungal-type). Disordered regions lie at residues 586 to 614 (TTDN…KDTN), 918 to 942 (SVPS…LNQD), and 1221 to 1253 (PPIS…TSSL). Residues 589–603 (NTRSGPPSNSNRNGS) show a composition bias toward low complexity. Over residues 604-614 (ETPSVSPKDTN) the composition is skewed to polar residues. The span at 918-927 (SVPSSCNSSS) shows a compositional bias: low complexity. A compositionally biased stretch (polar residues) spans 1225-1238 (SAKNNMAWGTTPES).

The protein localises to the nucleus. In terms of biological role, transcription factor that contributes to plasma membrane sphingolipid incorporation and membrane permeability, decreasing fluconazole accumulation. Regulates 337 genes under fluconazole stress, including several related to lipid biosynthesis pathways such as RSB1, encoding a sphingoid long-chain base efflux transporter. Associates with the promoter of RSB1 in the region containing two 5'-CCCCTCC-3' motifs and increases its promoter occupancy upon fluconazole stress. This chain is Transcription factor MAR1, found in Candida glabrata (strain ATCC 2001 / BCRC 20586 / JCM 3761 / NBRC 0622 / NRRL Y-65 / CBS 138) (Yeast).